Consider the following 293-residue polypeptide: ELMO domain-containing protein 2 (293 aa).

An ELMO domain is found at 126 to 282; that stretch reads QHEKLLIKLW…KFHEKIKGLL (157 aa).

In terms of biological role, acts as a GTPase-activating protein (GAP) toward guanine nucleotide exchange factors like ARL2, ARL3, ARF1 and ARF6, but not for GTPases outside the Arf family. The chain is ELMO domain-containing protein 2 (ELMOD2) from Bos taurus (Bovine).